A 551-amino-acid polypeptide reads, in one-letter code: ATPase expression protein 2, mitochondrial (551 aa).

The interval 530–551 (AQKAQKRFDDEEEDSMLLGRLW) is disordered.

It belongs to the AEP2 family. In terms of assembly, binds to the 5'UTR of the OLI1 mRNA.

It localises to the mitochondrion. Functionally, required for translation of the mitochondrial OLI1 transcript coding for the mitochondrial ATP synthase subunit 9. In Lachancea thermotolerans (strain ATCC 56472 / CBS 6340 / NRRL Y-8284) (Yeast), this protein is ATPase expression protein 2, mitochondrial (AEP2).